The sequence spans 559 residues: Formate--tetrahydrofolate ligase (559 aa).

68–75 serves as a coordination point for ATP; it reads TPAGEGKS.

The protein belongs to the formate--tetrahydrofolate ligase family.

The enzyme catalyses (6S)-5,6,7,8-tetrahydrofolate + formate + ATP = (6R)-10-formyltetrahydrofolate + ADP + phosphate. It participates in one-carbon metabolism; tetrahydrofolate interconversion. In Clostridium tetani (strain Massachusetts / E88), this protein is Formate--tetrahydrofolate ligase.